The chain runs to 397 residues: MIRYFTAGESHGPALSAIVEGLPAGLTVTPEDINKELARRQQGYGRGGRMKIETDKADVLSGIRFGKTIGSPVTLQVENRDWKNWTVKMARFDTPAEEIPAITVPRPGHADLTGMIKYGFEDIRPVIERASARETAARVAACALAKVFLRSAGIQIGSYVSSIGAAGKTAPSPRLHELLDAGAETLAEEADASSVRMLEKEHETHAIAAIDKAKEEGDTLGGIIELFITGVPMGLGSYVQHDRRLDAELAAALISIQAVKGVEIGTAFENARKPGSQVHDALFLRKGDGPERKTNRAGGIEGSMTNGQIIHLRAAMKPIATLMSPLQSFDIRSLDAHLSHIERSDTCAVPACSVIAEAVIAPVIANALLRKTGGDHLEEILERLEAYKADIAKNFQP.

Residues Arg40 and Arg46 each coordinate NADP(+). Residues 129-131, 257-258, Gly302, 317-321, and Arg343 each bind FMN; these read RAS, QA, and KPIAT.

Belongs to the chorismate synthase family. In terms of assembly, homotetramer. Requires FMNH2 as cofactor.

It catalyses the reaction 5-O-(1-carboxyvinyl)-3-phosphoshikimate = chorismate + phosphate. It participates in metabolic intermediate biosynthesis; chorismate biosynthesis; chorismate from D-erythrose 4-phosphate and phosphoenolpyruvate: step 7/7. In terms of biological role, catalyzes the anti-1,4-elimination of the C-3 phosphate and the C-6 proR hydrogen from 5-enolpyruvylshikimate-3-phosphate (EPSP) to yield chorismate, which is the branch point compound that serves as the starting substrate for the three terminal pathways of aromatic amino acid biosynthesis. This reaction introduces a second double bond into the aromatic ring system. The chain is Chorismate synthase from Chlorobium phaeobacteroides (strain BS1).